The sequence spans 842 residues: Molybdenum cofactor sulfurase (842 aa).

At K236 the chain carries N6-(pyridoxal phosphate)lysine. The active site involves C402. Residues 637 to 680 form a disordered region; sequence PGSQHGDAQRSSKARLQKHQITTDQESDVQEVHPGSGTTTDSTW. Positions 663–831 constitute an MOSC domain; sequence SDVQEVHPGS…AARGDVAYPT (169 aa).

This sequence belongs to the class-V pyridoxal-phosphate-dependent aminotransferase family. MOCOS subfamily. It depends on pyridoxal 5'-phosphate as a cofactor.

It catalyses the reaction Mo-molybdopterin + L-cysteine + AH2 = thio-Mo-molybdopterin + L-alanine + A + H2O. The protein operates within cofactor biosynthesis; molybdopterin biosynthesis. Functionally, sulfurates the molybdenum cofactor. Sulfation of molybdenum is essential for xanthine dehydrogenase (XDH) and aldehyde oxidase (ADO) enzymes in which molybdenum cofactor is liganded by 1 oxygen and 1 sulfur atom in active form. The sequence is that of Molybdenum cofactor sulfurase from Pyricularia oryzae (strain 70-15 / ATCC MYA-4617 / FGSC 8958) (Rice blast fungus).